The sequence spans 86 residues: Exodeoxyribonuclease 7 small subunit (86 aa).

The tract at residues serine 64 to threonine 86 is disordered.

Belongs to the XseB family. As to quaternary structure, heterooligomer composed of large and small subunits.

The protein resides in the cytoplasm. It carries out the reaction Exonucleolytic cleavage in either 5'- to 3'- or 3'- to 5'-direction to yield nucleoside 5'-phosphates.. Bidirectionally degrades single-stranded DNA into large acid-insoluble oligonucleotides, which are then degraded further into small acid-soluble oligonucleotides. In Akkermansia muciniphila (strain ATCC BAA-835 / DSM 22959 / JCM 33894 / BCRC 81048 / CCUG 64013 / CIP 107961 / Muc), this protein is Exodeoxyribonuclease 7 small subunit.